Here is a 532-residue protein sequence, read N- to C-terminus: All-trans-retinyl ester 13-cis isomerohydrolase (532 aa).

The S-palmitoyl cysteine; in membrane form moiety is linked to residue cysteine 112. 3 residues coordinate Fe cation: histidine 180, histidine 241, and histidine 313. A lipid anchor (S-palmitoyl cysteine; in membrane form) is attached at cysteine 329. Histidine 527 is a Fe cation binding site.

This sequence belongs to the carotenoid oxygenase family. Fe(2+) serves as cofactor. Post-translationally, palmitoylated. In terms of tissue distribution, predominantly expressed in brain. Expressed at a low level in the eye.

The protein resides in the cytoplasm. It localises to the cell membrane. It carries out the reaction an all-trans-retinyl ester + H2O = 13-cis-retinol + a fatty acid + H(+). The catalysed reaction is lutein = (3R,3'S)-zeaxanthin. Functionally, specifically generates 13-cis retinol, a stereoisomeric form of retinoic acid. Capable of catalyzing the isomerization of lutein to meso-zeaxanthin an eye-specific carotenoid. This Danio rerio (Zebrafish) protein is All-trans-retinyl ester 13-cis isomerohydrolase (rpe65b).